The chain runs to 49 residues: Large ribosomal subunit protein bL33A (49 aa).

This sequence belongs to the bacterial ribosomal protein bL33 family.

This is Large ribosomal subunit protein bL33A from Levilactobacillus brevis (strain ATCC 367 / BCRC 12310 / CIP 105137 / JCM 1170 / LMG 11437 / NCIMB 947 / NCTC 947) (Lactobacillus brevis).